The chain runs to 706 residues: DNA ligase (706 aa).

Residues 47–51 (DSEYD), 96–97 (SI), and Glu133 each bind NAD(+). Lys135 acts as the N6-AMP-lysine intermediate in catalysis. Positions 156, 192, 323, and 347 each coordinate NAD(+). Residues Cys441, Cys444, Cys459, and Cys465 each coordinate Zn(2+). Residues 624-706 (VAPKPLSGKT…MRLLASAEAE (83 aa)) form the BRCT domain.

It belongs to the NAD-dependent DNA ligase family. LigA subfamily. The cofactor is Mg(2+). Requires Mn(2+) as cofactor.

The catalysed reaction is NAD(+) + (deoxyribonucleotide)n-3'-hydroxyl + 5'-phospho-(deoxyribonucleotide)m = (deoxyribonucleotide)n+m + AMP + beta-nicotinamide D-nucleotide.. DNA ligase that catalyzes the formation of phosphodiester linkages between 5'-phosphoryl and 3'-hydroxyl groups in double-stranded DNA using NAD as a coenzyme and as the energy source for the reaction. It is essential for DNA replication and repair of damaged DNA. This Polaromonas sp. (strain JS666 / ATCC BAA-500) protein is DNA ligase.